We begin with the raw amino-acid sequence, 135 residues long: Small ribosomal subunit protein uS12 (135 aa).

3-methylthioaspartic acid is present on D89. The tract at residues 103 to 135 is disordered; the sequence is DTAGVKNRMQSRSKYGTKRPKPGQAAAPAGKKR. Residues 111–123 are compositionally biased toward basic residues; it reads MQSRSKYGTKRPK. Positions 124 to 135 are enriched in low complexity; sequence PGQAAAPAGKKR.

It belongs to the universal ribosomal protein uS12 family. As to quaternary structure, part of the 30S ribosomal subunit. Contacts proteins S8 and S17. May interact with IF1 in the 30S initiation complex.

With S4 and S5 plays an important role in translational accuracy. Its function is as follows. Interacts with and stabilizes bases of the 16S rRNA that are involved in tRNA selection in the A site and with the mRNA backbone. Located at the interface of the 30S and 50S subunits, it traverses the body of the 30S subunit contacting proteins on the other side and probably holding the rRNA structure together. The combined cluster of proteins S8, S12 and S17 appears to hold together the shoulder and platform of the 30S subunit. In Gloeobacter violaceus (strain ATCC 29082 / PCC 7421), this protein is Small ribosomal subunit protein uS12.